A 485-amino-acid polypeptide reads, in one-letter code: Phenylalanine--tRNA ligase alpha subunit, cytoplasmic (485 aa).

Residues T318, 360-362 (QIE), and Y400 contribute to the L-phenylalanine site. E402 lines the Mg(2+) pocket. Position 426 (F426) interacts with L-phenylalanine.

It belongs to the class-II aminoacyl-tRNA synthetase family. Phe-tRNA synthetase alpha subunit type 2 subfamily. As to quaternary structure, tetramer of two alpha and two beta subunits. It depends on Mg(2+) as a cofactor.

The protein localises to the cytoplasm. It localises to the cytosol. The catalysed reaction is tRNA(Phe) + L-phenylalanine + ATP = L-phenylalanyl-tRNA(Phe) + AMP + diphosphate + H(+). The polypeptide is Phenylalanine--tRNA ligase alpha subunit, cytoplasmic (Arabidopsis thaliana (Mouse-ear cress)).